The sequence spans 180 residues: Large ribosomal subunit protein uL5 (180 aa).

Belongs to the universal ribosomal protein uL5 family. In terms of assembly, part of the 50S ribosomal subunit; part of the 5S rRNA/L5/L18/L25 subcomplex. Contacts the 5S rRNA and the P site tRNA. Forms a bridge to the 30S subunit in the 70S ribosome.

Functionally, this is one of the proteins that bind and probably mediate the attachment of the 5S RNA into the large ribosomal subunit, where it forms part of the central protuberance. In the 70S ribosome it contacts protein S13 of the 30S subunit (bridge B1b), connecting the 2 subunits; this bridge is implicated in subunit movement. Contacts the P site tRNA; the 5S rRNA and some of its associated proteins might help stabilize positioning of ribosome-bound tRNAs. The sequence is that of Large ribosomal subunit protein uL5 from Cupriavidus necator (strain ATCC 17699 / DSM 428 / KCTC 22496 / NCIMB 10442 / H16 / Stanier 337) (Ralstonia eutropha).